The sequence spans 630 residues: Protein zwilch homolog (630 aa).

This sequence belongs to the ZWILCH family. As to quaternary structure, component of the RZZ complex composed of rod-1, czw-1 and zwl-1. Interacts with the spindly-like protein spdl-1. Interacts with NDC80 complex component ndc-80.

The protein localises to the cytoplasm. The protein resides in the cell cortex. It is found in the chromosome. Its subcellular location is the centromere. It localises to the kinetochore. The protein localises to the cytoskeleton. The protein resides in the spindle. Functionally, essential component of the mitotic checkpoint, which prevents cells from prematurely exiting mitosis. Required for chromosome segregation, the assembly of the dynein-dynactin and mdf-1-mdf-2 complexes onto kinetochores and spindle pole separation. Its function related to the spindle assembly machinery and kinetochore-microtubule attachments likely depends on its association in the mitotic RZZ complex. The RZZ complex recruits the spindly-like protein spdl-1 to kinetochores. To prevent irregular chromosome segregation, the complex also inhibits the attachment of the kinetochore-associated NDC80 complex to microtubules. The recruitment of spdl-1 to kinetochores relieves this inhibition. Required for embryonic development. The polypeptide is Protein zwilch homolog (zwl-1) (Caenorhabditis elegans).